We begin with the raw amino-acid sequence, 83 residues long: uncharacterized protein (83 aa).

The disordered stretch occupies residues 58 to 83 (EHGHDDEYDEFSDPNAWVPRRSRDTG).

This is an uncharacterized protein from Mycobacterium tuberculosis (strain CDC 1551 / Oshkosh).